Reading from the N-terminus, the 307-residue chain is Small ribosomal subunit biogenesis GTPase RsgA (307 aa).

In terms of domain architecture, CP-type G spans 80-237 (KVDLRQAIVS…IVDTPGIKEF (158 aa)). GTP contacts are provided by residues 129-132 (NKID) and 180-188 (GQSGVGKSS). Positions 261, 266, 268, and 274 each coordinate Zn(2+).

This sequence belongs to the TRAFAC class YlqF/YawG GTPase family. RsgA subfamily. In terms of assembly, monomer. Associates with 30S ribosomal subunit, binds 16S rRNA. Zn(2+) serves as cofactor.

Its subcellular location is the cytoplasm. Its function is as follows. One of several proteins that assist in the late maturation steps of the functional core of the 30S ribosomal subunit. Helps release RbfA from mature subunits. May play a role in the assembly of ribosomal proteins into the subunit. Circularly permuted GTPase that catalyzes slow GTP hydrolysis, GTPase activity is stimulated by the 30S ribosomal subunit. In Borrelia garinii subsp. bavariensis (strain ATCC BAA-2496 / DSM 23469 / PBi) (Borreliella bavariensis), this protein is Small ribosomal subunit biogenesis GTPase RsgA.